The following is a 1027-amino-acid chain: Translation initiation factor IF-2 (1027 aa).

A disordered region spans residues 31 to 433 (YVKSASSTVE…GGVRLPRGNG (403 aa)). Over residues 57–68 (KKGGGDSNGRAG) the composition is skewed to gly residues. A compositionally biased stretch (pro residues) spans 110 to 122 (GPKPGPKPGPKAP). The segment covering 123–145 (APETKPFEEAPAPAAKADAPAQP) has biased composition (low complexity). The segment covering 148–171 (EQPRSEQPRSEQPRSEQPRSERSG) has biased composition (basic and acidic residues). Pro residues-rich tracts occupy residues 174 to 188 (PGGP…PKPG) and 201 to 212 (PPKPQSPKPGPR). Positions 237-268 (PGGGQRQGGQGPGRGGPQGGRPDRQGGGGQGA) are enriched in gly residues. A compositionally biased stretch (pro residues) spans 293 to 302 (GMMPPRPNPG). The segment covering 311–397 (SGGGPGGGRG…GAAGAFGRPG (87 aa)) has biased composition (gly residues). The span at 401–410 (RRGRKSKRQK) shows a compositional bias: basic residues. The tr-type G domain occupies 523–695 (SRPPVVTVMG…ILLTADATLD (173 aa)). The tract at residues 532–539 (GHVDHGKT) is G1. Residue 532–539 (GHVDHGKT) participates in GTP binding. The interval 557–561 (GITQH) is G2. The tract at residues 582–585 (DTPG) is G3. Residues 582–586 (DTPGH) and 636–639 (NKID) contribute to the GTP site. The tract at residues 636–639 (NKID) is G4. Positions 672–674 (SAR) are G5.

This sequence belongs to the TRAFAC class translation factor GTPase superfamily. Classic translation factor GTPase family. IF-2 subfamily.

It localises to the cytoplasm. Functionally, one of the essential components for the initiation of protein synthesis. Protects formylmethionyl-tRNA from spontaneous hydrolysis and promotes its binding to the 30S ribosomal subunits. Also involved in the hydrolysis of GTP during the formation of the 70S ribosomal complex. The protein is Translation initiation factor IF-2 of Saccharopolyspora erythraea (strain ATCC 11635 / DSM 40517 / JCM 4748 / NBRC 13426 / NCIMB 8594 / NRRL 2338).